The chain runs to 30 residues: Protein Tat (30 aa).

The disordered stretch occupies residues 1 to 30; that stretch reads PLPTTRGNPTGPKESKKEVESKTETDPFAW. The Cell attachment site motif lies at 6–8; that stretch reads RGN. Residues 13–30 show a composition bias toward basic and acidic residues; it reads KESKKEVESKTETDPFAW.

It belongs to the lentiviruses Tat family. As to quaternary structure, interacts with host CCNT1. Associates with the P-TEFb complex composed at least of Tat, P-TEFb (CDK9 and CCNT1), TAR RNA, RNA Pol II. Recruits the HATs CREBBP, TAF1/TFIID, EP300, PCAF and GCN5L2. Interacts with host KAT5/Tip60; this interaction targets the latter to degradation. Interacts with the host deacetylase SIRT1. Interacts with host capping enzyme RNGTT; this interaction stimulates RNGTT. Binds to host KDR, and to the host integrins ITGAV/ITGB3 and ITGA5/ITGB1. Interacts with host KPNB1/importin beta-1 without previous binding to KPNA1/importin alpha-1. Interacts with EIF2AK2. Interacts with host nucleosome assembly protein NAP1L1; this interaction may be required for the transport of Tat within the nucleus, since the two proteins interact at the nuclear rim. Interacts with host C1QBP/SF2P32; this interaction involves lysine-acetylated Tat. Interacts with the host chemokine receptors CCR2, CCR3 and CXCR4. Interacts with host DPP4/CD26; this interaction may trigger an anti-proliferative effect. Interacts with host LDLR. Interacts with the host extracellular matrix metalloproteinase MMP1. Interacts with host PRMT6; this interaction mediates Tat's methylation. Interacts with, and is ubiquitinated by MDM2/Hdm2. Interacts with host PSMC3 and HTATIP2. Interacts with STAB1; this interaction may overcome SATB1-mediated repression of IL2 and IL2RA (interleukin) in T cells by binding to the same domain than HDAC1. Interacts (when acetylated on Lys-50 and Lys-51) with human CDK13, thereby increasing HIV-1 mRNA splicing and promoting the production of the doubly spliced HIV-1 protein Nef. In terms of processing, acetylation by EP300, CREBBP, GCN5L2/GCN5 and PCAF regulates the transactivation activity of Tat. EP300-mediated acetylation of Lys-50 promotes dissociation of Tat from the TAR RNA through the competitive binding to PCAF's bromodomain. In addition, the non-acetylated Tat's N-terminus can also interact with PCAF. PCAF-mediated acetylation of Lys-28 enhances Tat's binding to CCNT1. Lys-50 is deacetylated by SIRT1. Post-translationally, phosphorylated by EIF2AK2 on serine and threonine residues adjacent to the basic region important for TAR RNA binding and function. Phosphorylation of Tat by EIF2AK2 is dependent on the prior activation of EIF2AK2 by dsRNA. Asymmetrical arginine methylation by host PRMT6 seems to diminish the transactivation capacity of Tat and affects the interaction with host CCNT1. In terms of processing, polyubiquitination by MDM2 does not target Tat to degradation, but activates its transactivation function and fosters interaction with CCNT1 and TAR RNA.

Its subcellular location is the host nucleus. The protein resides in the host nucleolus. The protein localises to the host cytoplasm. It localises to the secreted. Functionally, transcriptional activator that increases RNA Pol II processivity, thereby increasing the level of full-length viral transcripts. Recognizes a hairpin structure at the 5'-LTR of the nascent viral mRNAs referred to as the transactivation responsive RNA element (TAR) and recruits the cyclin T1-CDK9 complex (P-TEFb complex) that will in turn hyperphosphorylate the RNA polymerase II to allow efficient elongation. The CDK9 component of P-TEFb and other Tat-activated kinases hyperphosphorylate the C-terminus of RNA Pol II that becomes stabilized and much more processive. Other factors such as HTATSF1/Tat-SF1, SUPT5H/SPT5, and HTATIP2 are also important for Tat's function. Besides its effect on RNA Pol II processivity, Tat induces chromatin remodeling of proviral genes by recruiting the histone acetyltransferases (HATs) CREBBP, EP300 and PCAF to the chromatin. This also contributes to the increase in proviral transcription rate, especially when the provirus integrates in transcriptionally silent region of the host genome. To ensure maximal activation of the LTR, Tat mediates nuclear translocation of NF-kappa-B by interacting with host RELA. Through its interaction with host TBP, Tat may also modulate transcription initiation. Tat can reactivate a latently infected cell by penetrating in it and transactivating its LTR promoter. In the cytoplasm, Tat is thought to act as a translational activator of HIV-1 mRNAs. Its function is as follows. Extracellular circulating Tat can be endocytosed by surrounding uninfected cells via the binding to several surface receptors such as CD26, CXCR4, heparan sulfate proteoglycans (HSPG) or LDLR. Neurons are rarely infected, but they internalize Tat via their LDLR. Endosomal low pH allows Tat to cross the endosome membrane to enter the cytosol and eventually further translocate into the nucleus, thereby inducing severe cell dysfunctions ranging from cell activation to cell death. Through its interaction with nuclear HATs, Tat is potentially able to control the acetylation-dependent cellular gene expression. Tat seems to inhibit the HAT activity of KAT5/Tip60 and TAF1, and consequently modify the expression of specific cellular genes. Modulates the expression of many cellular genes involved in cell survival, proliferation or in coding for cytokines (such as IL10) or cytokine receptors. May be involved in the derepression of host interleukin IL2 expression. Mediates the activation of cyclin-dependent kinases and dysregulation of microtubule network. Tat plays a role in T-cell and neurons apoptosis. Tat induced neurotoxicity and apoptosis probably contribute to neuroAIDS. Host extracellular matrix metalloproteinase MMP1 cleaves Tat and decreases Tat's mediated neurotoxicity. Circulating Tat also acts as a chemokine-like and/or growth factor-like molecule that binds to specific receptors on the surface of the cells, affecting many cellular pathways. In the vascular system, Tat binds to ITGAV/ITGB3 and ITGA5/ITGB1 integrins dimers at the surface of endothelial cells and competes with bFGF for heparin-binding sites, leading to an excess of soluble bFGF. Binds to KDR/VEGFR-2. All these Tat-mediated effects enhance angiogenesis in Kaposi's sarcoma lesions. The protein is Protein Tat of Human immunodeficiency virus type 1 group M subtype A (isolate Z321) (HIV-1).